Reading from the N-terminus, the 354-residue chain is Uroporphyrinogen decarboxylase (354 aa).

Substrate contacts are provided by residues 27-31 (RQAGR), Phe-46, Asp-77, Tyr-153, Thr-208, and His-326.

It belongs to the uroporphyrinogen decarboxylase family. In terms of assembly, homodimer.

It localises to the cytoplasm. The enzyme catalyses uroporphyrinogen III + 4 H(+) = coproporphyrinogen III + 4 CO2. It functions in the pathway porphyrin-containing compound metabolism; protoporphyrin-IX biosynthesis; coproporphyrinogen-III from 5-aminolevulinate: step 4/4. Functionally, catalyzes the decarboxylation of four acetate groups of uroporphyrinogen-III to yield coproporphyrinogen-III. This chain is Uroporphyrinogen decarboxylase, found in Neisseria meningitidis serogroup A / serotype 4A (strain DSM 15465 / Z2491).